Reading from the N-terminus, the 405-residue chain is Indoleamine 2,3-dioxygenase acdA (405 aa).

His-312 contributes to the heme binding site.

It belongs to the indoleamine 2,3-dioxygenase family. The cofactor is heme.

The catalysed reaction is L-tryptophan + O2 = N-formyl-L-kynurenine. Its pathway is secondary metabolite biosynthesis. Indoleamine 2,3-dioxygenase; part of the gene cluster that mediates the biosynthesis of aspcandine, a pyrrolobenzazepine alkaloid. Initially, the indoleamine 2,3-dioxygenase acdA accepts L-tryptophan and performs the oxidative opening of the indole ring to yield N'-formyl-L-kynurenine, which undergoes the spontaneous deformylation reaction to provide L-kynurenine. The kynurenine 3-monooxygenase acdD then hydroxylates L-kynurenine to afford 3-hydroxy-L-kynurenine. 3-hydroxy-L-kynurenine is activated by the A domain of the NRPS-PKS acdB and subsequently loaded onto the enzyme. The KS domain conducts the decarboxylative condensation of the 3-hydroxy-L-kynurenyl and malonyl moieties, and subsequent nucleophilic attacks by the two amino groups would occur nonenzymatically at two distinct positions, achieving the chain release and the construction of the tricyclic system. Finally, a dehydration reaction completes the biosynthesis to yield aspcandine. The sequence is that of Indoleamine 2,3-dioxygenase acdA from Aspergillus candidus.